The primary structure comprises 331 residues: UPF0324 membrane protein SA0329 (331 aa).

Transmembrane regions (helical) follow at residues Phe-9–Ala-26, Ile-31–Tyr-48, Leu-69–Gly-88, Leu-93–Leu-115, Ala-122–Phe-144, Ser-154–Phe-176, Tyr-183–Gly-202, Leu-217–Met-234, Ile-247–Pro-269, Leu-273–Val-295, and Leu-308–Tyr-330.

This sequence belongs to the UPF0324 family.

It localises to the cell membrane. This Staphylococcus aureus (strain N315) protein is UPF0324 membrane protein SA0329.